The sequence spans 293 residues: Ribosomal RNA small subunit methyltransferase A (293 aa).

Residues Asn33, Val35, Gly60, Glu81, Asp111, and Asn130 each coordinate S-adenosyl-L-methionine.

It belongs to the class I-like SAM-binding methyltransferase superfamily. rRNA adenine N(6)-methyltransferase family. RsmA subfamily.

Its subcellular location is the cytoplasm. The enzyme catalyses adenosine(1518)/adenosine(1519) in 16S rRNA + 4 S-adenosyl-L-methionine = N(6)-dimethyladenosine(1518)/N(6)-dimethyladenosine(1519) in 16S rRNA + 4 S-adenosyl-L-homocysteine + 4 H(+). Specifically dimethylates two adjacent adenosines (A1518 and A1519) in the loop of a conserved hairpin near the 3'-end of 16S rRNA in the 30S particle. May play a critical role in biogenesis of 30S subunits. The protein is Ribosomal RNA small subunit methyltransferase A of Corynebacterium glutamicum (strain ATCC 13032 / DSM 20300 / JCM 1318 / BCRC 11384 / CCUG 27702 / LMG 3730 / NBRC 12168 / NCIMB 10025 / NRRL B-2784 / 534).